A 140-amino-acid chain; its full sequence is Small ribosomal subunit protein uS19 (140 aa).

This sequence belongs to the universal ribosomal protein uS19 family.

Functionally, protein S19 forms a complex with S13 that binds strongly to the 16S ribosomal RNA. In Metallosphaera sedula (strain ATCC 51363 / DSM 5348 / JCM 9185 / NBRC 15509 / TH2), this protein is Small ribosomal subunit protein uS19.